The sequence spans 288 residues: MSPEELKQLELLRNRFAQLTSNLGSLRTSVSNSNPLPTYESLQASVNILQANIRSIQDIATENAGLFQRLAIHPSTNFPGRTQEHILTQLLRKKLEPNVESWVEEARATARGVGVDASKLAGGVHRRGEHDYDDEGTYGMDEDGDDAPQDPFSEQWADMLDNFQQTLQQYVTVQVKKKYTAEERAAGIENVRTGLRQTLEESEDDDEDEEEEEEDEEEDEAAAAAGNAGGLATGAGGSAAAGGGMFGAIEPEHIFYLQAQGNLQLPGNVPIESKRIQTVPTRRVAPPR.

Residues 4–58 (EELKQLELLRNRFAQLTSNLGSLRTSVSNSNPLPTYESLQASVNILQANIRSIQD) adopt a coiled-coil conformation. Disordered stretches follow at residues 122-150 (GGVH…APQD), 191-245 (VRTG…GGGM), and 266-288 (PGNV…APPR). 2 stretches are compositionally biased toward acidic residues: residues 131-148 (DYDD…DDAP) and 200-221 (EESE…EDEA). The stretch at 180 to 228 (TAEERAAGIENVRTGLRQTLEESEDDDEDEEEEEEDEEEDEAAAAAGNA) forms a coiled coil. Residues 227 to 245 (NAGGLATGAGGSAAAGGGM) are compositionally biased toward gly residues.

This sequence belongs to the Mediator complex subunit 8 family. Component of the Mediator complex.

It is found in the nucleus. In terms of biological role, component of the Mediator complex, a coactivator involved in the regulated transcription of nearly all RNA polymerase II-dependent genes. Mediator functions as a bridge to convey information from gene-specific regulatory proteins to the basal RNA polymerase II transcription machinery. Mediator is recruited to promoters by direct interactions with regulatory proteins and serves as a scaffold for the assembly of a functional preinitiation complex with RNA polymerase II and the general transcription factors. The protein is Mediator of RNA polymerase II transcription subunit 8 (MED8) of Chaetomium globosum (strain ATCC 6205 / CBS 148.51 / DSM 1962 / NBRC 6347 / NRRL 1970) (Soil fungus).